The sequence spans 201 residues: MGSGRRALSAVPAVLLVLTLPGLPVWAQNDTEPIVLEGKCLVVCDSNPATDSKGSSSSPLGISVRAANSKVAFSAVRSTNHEPSEMSNKTRIIYFDQILVNVGNFFTLESVFVAPRKGIYSFSFHVIKVYQSQTIQVNLMLNGKPVISAFAGDKDVTREAATNGVLLYLDKEDKVYLKLEKGNLVGGWQYSTFSGFLVFPL.

A signal peptide spans 1–27 (MGSGRRALSAVPAVLLVLTLPGLPVWA). N-linked (GlcNAc...) asparagine glycosylation is found at Asn29 and Asn88. Residues 66–201 (AANSKVAFSA…TFSGFLVFPL (136 aa)) enclose the C1q domain.

As to quaternary structure, homohexamer; disulfide-linked homotrimers. The trimers are assembled via the globular C1q domains. The trimers associate via N-terminal cysteine residues to form disulfide-linked hexamers. May form oligomers with CBLN1, CBLN2 and CBLN3 prior to secretion. Strongly interacts with DCC in a NTN1-displaceable fashion. Weakly binds to NRXN1 and NRXN2 long and short isoforms produced by alternative promoter usage. Interaction with NRXN3 short isoform is hardly detectable; no interaction at all with NRXN3 long isoform. Post-translationally, sialoglycoprotein.

Its subcellular location is the secreted. It localises to the synapse. Functionally, acts as a synaptic organizer in specific subsets of neurons in the brain. Essential for the formation and maintenance of inhibitory GABAergic synapses. Promotes the development of dendrite-targeting inhibitory GABAergic synapses made by somatostatin-positive interneurons. May contribute to the function of ventral medial habenula region of the brain implicated in the regulation of anxiety-related behaviors. May play a role in CBLN3 export from the endoplasmic reticulum and secretion. The sequence is that of Cerebellin-4 (CBLN4) from Homo sapiens (Human).